A 630-amino-acid polypeptide reads, in one-letter code: tRNA uridine 5-carboxymethylaminomethyl modification enzyme MnmG (630 aa).

13–18 (GGGHAG) contacts FAD. 273–287 (GPRYCPSIEDKVNRF) contacts NAD(+).

This sequence belongs to the MnmG family. In terms of assembly, homodimer. Heterotetramer of two MnmE and two MnmG subunits. Requires FAD as cofactor.

Its subcellular location is the cytoplasm. Functionally, NAD-binding protein involved in the addition of a carboxymethylaminomethyl (cmnm) group at the wobble position (U34) of certain tRNAs, forming tRNA-cmnm(5)s(2)U34. The sequence is that of tRNA uridine 5-carboxymethylaminomethyl modification enzyme MnmG from Teredinibacter turnerae (strain ATCC 39867 / T7901).